Consider the following 212-residue polypeptide: Dephospho-CoA kinase (212 aa).

Residues 4-204 (IVALTGGICS…RDYLKAEKTT (201 aa)) form the DPCK domain. 12–17 (CSGKSV) lines the ATP pocket.

This sequence belongs to the CoaE family.

The protein resides in the cytoplasm. It catalyses the reaction 3'-dephospho-CoA + ATP = ADP + CoA + H(+). It functions in the pathway cofactor biosynthesis; coenzyme A biosynthesis; CoA from (R)-pantothenate: step 5/5. Functionally, catalyzes the phosphorylation of the 3'-hydroxyl group of dephosphocoenzyme A to form coenzyme A. This Blochmanniella pennsylvanica (strain BPEN) protein is Dephospho-CoA kinase.